Here is a 282-residue protein sequence, read N- to C-terminus: Large ribosomal subunit protein uL2c (282 aa).

The tract at residues 230–261 (SAQNAVDHPHGGGEGKAPIGRIPSTPWGKPAL) is disordered.

It belongs to the universal ribosomal protein uL2 family. In terms of assembly, part of the 50S ribosomal subunit.

It localises to the plastid. The polypeptide is Large ribosomal subunit protein uL2c (rpl2) (Helicosporidium sp. subsp. Simulium jonesii (Green alga)).